We begin with the raw amino-acid sequence, 435 residues long: MTLPRQCAAACRTGGGGGGVVRCRAVAAAGGAVAVRDAVVAPVARRGAARKTAETVAGMWREVQGCGDWEGMLEPAPHPVLRGEVARYGELVGACYKAFDLDPASRRYLNCKYGRERMLEEVGMGGAGYEVTRYIYAAADVSVPTMEPSTSGRGRWIGYVAVSTDEMSRRLGRRDVLVSFRGTVTPAEWMANLMSSLEAARLDPCDPRPDVKVESGFLSLYTSADKTCRFGGAGSCREQLLREVSRLVAAYSGGGEDVSVTLAGHSMGSALALLSAYDLAELGLNRAAPVTVFSFGGPRVGNAAFKARCDELGVKALRVTNVHDPITKLPGVFLNEATAGVLRPWRHSCYTHVGVELPLDFFKVGDLASVHDLATYISLLRGADKKQPAAAAADAGGVLAKVMDFVGRRRGGGALPWHDAAMIQMGGLVQTLGLI.

The N-terminal 31 residues, Met-1 to Gly-31, are a transit peptide targeting the chloroplast and mitochondrion. The short motif at Gly-264–Gly-268 is the GXSXG element. Ser-266 acts as the Acyl-ester intermediate in catalysis. Catalysis depends on charge relay system residues Asp-324 and His-371.

Belongs to the AB hydrolase superfamily. Lipase family.

It is found in the mitochondrion. It localises to the plastid. Its subcellular location is the chloroplast. It catalyses the reaction a 1,2-diacyl-sn-glycero-3-phosphocholine + H2O = a 2-acyl-sn-glycero-3-phosphocholine + a fatty acid + H(+). In terms of biological role, phospholipase that releases free fatty acids from phospholipids. Catalyzes the initial step of jasmonate (JA) biosynthesis. Required for the biosynthesis of endogenous JA in seedling, inflorescence and spikelets. Not essential for JA biosynthesis after wounding. Mediates spikelet development and specification of empty-glume identity. Functions in a high temperature-dependent manner to maintain floral developmental robustness under heat stress conditions. Functions by safeguarding the expression of several floral identity genes, such as MADS1, MADS6 and G1. This chain is Phospholipase A1 EG1, chloroplastic/mitochondrial, found in Oryza sativa subsp. indica (Rice).